Here is a 97-residue protein sequence, read N- to C-terminus: Large ribosomal subunit protein bL28 (97 aa).

The protein belongs to the bacterial ribosomal protein bL28 family.

The polypeptide is Large ribosomal subunit protein bL28 (Rickettsia canadensis (strain McKiel)).